A 379-amino-acid polypeptide reads, in one-letter code: Fucose-specific lectin g276 (379 aa).

Glu-126 is a binding site for alpha-L-fucose. Positions 126, 163, and 185 each coordinate beta-L-fucose. Residues Trp-185, Arg-222, and Glu-234 each coordinate alpha-L-fucose. The beta-L-fucose site is built by Trp-242 and Glu-282. Trp-289 contacts alpha-L-fucose.

It belongs to the fungal fucose-specific lectin family.

Functionally, lectin that specifically binds to L-fucose. Is associated with the morphogenesis of the fungus, and plays a role in the formation of the constricting rings involved in nematode-trapping. The polypeptide is Fucose-specific lectin g276 (Arthrobotrys oligospora (strain ATCC 24927 / CBS 115.81 / DSM 1491) (Nematode-trapping fungus)).